Consider the following 833-residue polypeptide: DNA gyrase subunit A (833 aa).

The region spanning 34-500 (LPDVRDGLKP…AGDVRDIEDI (467 aa)) is the Topo IIA-type catalytic domain. The active-site O-(5'-phospho-DNA)-tyrosine intermediate is Tyr122. The short motif at 527–533 (QKRGGQG) is the GyrA-box element.

The protein belongs to the type II topoisomerase GyrA/ParC subunit family. In terms of assembly, heterotetramer, composed of two GyrA and two GyrB chains. In the heterotetramer, GyrA contains the active site tyrosine that forms a transient covalent intermediate with DNA, while GyrB binds cofactors and catalyzes ATP hydrolysis.

It localises to the cytoplasm. It catalyses the reaction ATP-dependent breakage, passage and rejoining of double-stranded DNA.. Functionally, a type II topoisomerase that negatively supercoils closed circular double-stranded (ds) DNA in an ATP-dependent manner to modulate DNA topology and maintain chromosomes in an underwound state. Negative supercoiling favors strand separation, and DNA replication, transcription, recombination and repair, all of which involve strand separation. Also able to catalyze the interconversion of other topological isomers of dsDNA rings, including catenanes and knotted rings. Type II topoisomerases break and join 2 DNA strands simultaneously in an ATP-dependent manner. This is DNA gyrase subunit A from Chlamydia muridarum (strain MoPn / Nigg).